A 382-amino-acid polypeptide reads, in one-letter code: 3-hydroxyisobutyryl-CoA hydrolase, mitochondrial (382 aa).

Substrate-binding residues include glutamate 117, glycine 142, glutamate 165, and aspartate 173.

The protein belongs to the enoyl-CoA hydratase/isomerase family.

Its subcellular location is the mitochondrion. The enzyme catalyses 3-hydroxy-2-methylpropanoyl-CoA + H2O = 3-hydroxy-2-methylpropanoate + CoA + H(+). It participates in amino-acid degradation; L-valine degradation. Hydrolyzes 3-hydroxyisobutyryl-CoA (HIBYL-CoA), a saline catabolite. Has high activity toward isobutyryl-CoA. Could be an isobutyryl-CoA dehydrogenase that functions in valine catabolism. Also hydrolyzes 3-hydroxypropanoyl-CoA. The protein is 3-hydroxyisobutyryl-CoA hydrolase, mitochondrial (hibch) of Danio rerio (Zebrafish).